Reading from the N-terminus, the 481-residue chain is Beta-amyrin 28-monooxygenase (481 aa).

A helical transmembrane segment spans residues 4–24 (FYVPLLSLFVLFVSLSFYFLF). Cys-428 lines the heme pocket.

This sequence belongs to the cytochrome P450 family. It depends on heme as a cofactor.

The protein resides in the membrane. The catalysed reaction is beta-amyrin + 3 reduced [NADPH--hemoprotein reductase] + 3 O2 = oleanolate + 3 oxidized [NADPH--hemoprotein reductase] + 4 H2O + 4 H(+). In terms of biological role, catalyzes the oxidation of the methyl group to a carboxyl group at the C-28 position of beta-amyrin to form oleanolate. The sequence is that of Beta-amyrin 28-monooxygenase from Kalopanax septemlobus (Castor aralia).